We begin with the raw amino-acid sequence, 89 residues long: Small ribosomal subunit protein uS15 (89 aa).

This sequence belongs to the universal ribosomal protein uS15 family. Part of the 30S ribosomal subunit. Forms a bridge to the 50S subunit in the 70S ribosome, contacting the 23S rRNA.

In terms of biological role, one of the primary rRNA binding proteins, it binds directly to 16S rRNA where it helps nucleate assembly of the platform of the 30S subunit by binding and bridging several RNA helices of the 16S rRNA. Its function is as follows. Forms an intersubunit bridge (bridge B4) with the 23S rRNA of the 50S subunit in the ribosome. The chain is Small ribosomal subunit protein uS15 from Methylorubrum populi (strain ATCC BAA-705 / NCIMB 13946 / BJ001) (Methylobacterium populi).